The primary structure comprises 59 residues: Large ribosomal subunit protein uL30 (59 aa).

Belongs to the universal ribosomal protein uL30 family. As to quaternary structure, part of the 50S ribosomal subunit.

The sequence is that of Large ribosomal subunit protein uL30 from Hydrogenobaculum sp. (strain Y04AAS1).